The chain runs to 680 residues: WD repeat-containing protein 48 homolog (680 aa).

WD repeat units follow at residues 26-65 (QHRN…SEKY), 71-110 (HHND…CMST), 113-152 (THRD…ALTA), 164-203 (GSKD…RIMK), 206-245 (GHTE…CVQT), 248-287 (VHKE…NKTL), 290-329 (EEQA…RCTL), and 350-389 (KGGA…KKEQ). The interval 592–616 (ETTPSGGNANNSLQNSQSDANSEGS) is disordered.

Belongs to the WD repeat WDR48 family. In terms of assembly, catalytic component of the Usp12-46 deubiquitylase complex consisting of Usp12-46, Wdr20 and Uaf1; regulatory subunit that, together wtih Wdr20, stabilizes Usp12-46. The Usp12-46 deubiquitylase complex associates with arr/arrow; the interaction leads to deubiquitination and stabilization of arr/arrow.

Regulatory component of the Usp12-46 deubiquitylase complex. activates deubiquitination by increasing the catalytic turnover without increasing the affinity of deubiquitinating enzymes for the substrate. The complex deubiquitylates the wg/wingless-signaling receptor arr/arrow, which stabilizes the receptor and increases its concentration at the cell surface; this enhances the sensitivity of cells to wg/wingless-signal stimulation. This increases the amplitude and spatial range of the signaling response to the wg/wingless morphogen gradient, facilitating the precise concentration-dependent regulation of its target genes. Together with Wdr20 and Usp12-46 required for wg/wingless-mediated signaling in the wing imaginal disc and for wg/wingless-dependent regulation of intestinal stem cell proliferation. The protein is WD repeat-containing protein 48 homolog of Drosophila sechellia (Fruit fly).